The following is a 440-amino-acid chain: Thymidine phosphorylase (440 aa).

It belongs to the thymidine/pyrimidine-nucleoside phosphorylase family. As to quaternary structure, homodimer.

The catalysed reaction is thymidine + phosphate = 2-deoxy-alpha-D-ribose 1-phosphate + thymine. It functions in the pathway pyrimidine metabolism; dTMP biosynthesis via salvage pathway; dTMP from thymine: step 1/2. The enzymes which catalyze the reversible phosphorolysis of pyrimidine nucleosides are involved in the degradation of these compounds and in their utilization as carbon and energy sources, or in the rescue of pyrimidine bases for nucleotide synthesis. The polypeptide is Thymidine phosphorylase (Proteus mirabilis (strain HI4320)).